Consider the following 261-residue polypeptide: Cytochrome c oxidase subunit 3 (261 aa).

Residues 1–15 (MTHQTHAYHMVNPSP) are Mitochondrial matrix-facing. The chain crosses the membrane as a helical span at residues 16–34 (WPLTGALSALLMTSGLIMW). Topologically, residues 35 to 40 (FHFNST) are mitochondrial intermembrane. Residues 41 to 66 (ALLMLGLTTNMLTMYQWWRDIVREST) traverse the membrane as a helical segment. Topologically, residues 67 to 72 (FQGHHT) are mitochondrial matrix. The helical transmembrane segment at 73 to 105 (PTVQKGLRYGMILFIISEVLFFTGFFWAFYHSS) threads the bilayer. The Mitochondrial intermembrane segment spans residues 106 to 128 (LAPTPELGGCWPPTGIHPLNPLE). The helical transmembrane segment at 129 to 152 (VPLLNTSVLLASGVSITWAHHSLM) threads the bilayer. Topologically, residues 153–155 (EGN) are mitochondrial matrix. The chain crosses the membrane as a helical span at residues 156 to 183 (RNHMLQALFITIALGVYFTLLQASEYYE). Over 184 to 190 (APFTISD) the chain is Mitochondrial intermembrane. A helical transmembrane segment spans residues 191-223 (GVYGSTFFVATGFHGLHVIIGSTFLIVCFFRQL). Residues 224–232 (KFHFTSNHH) are Mitochondrial matrix-facing. A helical membrane pass occupies residues 233–256 (FGFEAAAWYWHFVDVVWLFLYVSI). Over 257-261 (YWWGS) the chain is Mitochondrial intermembrane.

It belongs to the cytochrome c oxidase subunit 3 family. As to quaternary structure, component of the cytochrome c oxidase (complex IV, CIV), a multisubunit enzyme composed of 14 subunits. The complex is composed of a catalytic core of 3 subunits MT-CO1, MT-CO2 and MT-CO3, encoded in the mitochondrial DNA, and 11 supernumerary subunits COX4I, COX5A, COX5B, COX6A, COX6B, COX6C, COX7A, COX7B, COX7C, COX8 and NDUFA4, which are encoded in the nuclear genome. The complex exists as a monomer or a dimer and forms supercomplexes (SCs) in the inner mitochondrial membrane with NADH-ubiquinone oxidoreductase (complex I, CI) and ubiquinol-cytochrome c oxidoreductase (cytochrome b-c1 complex, complex III, CIII), resulting in different assemblies (supercomplex SCI(1)III(2)IV(1) and megacomplex MCI(2)III(2)IV(2)).

The protein localises to the mitochondrion inner membrane. It carries out the reaction 4 Fe(II)-[cytochrome c] + O2 + 8 H(+)(in) = 4 Fe(III)-[cytochrome c] + 2 H2O + 4 H(+)(out). In terms of biological role, component of the cytochrome c oxidase, the last enzyme in the mitochondrial electron transport chain which drives oxidative phosphorylation. The respiratory chain contains 3 multisubunit complexes succinate dehydrogenase (complex II, CII), ubiquinol-cytochrome c oxidoreductase (cytochrome b-c1 complex, complex III, CIII) and cytochrome c oxidase (complex IV, CIV), that cooperate to transfer electrons derived from NADH and succinate to molecular oxygen, creating an electrochemical gradient over the inner membrane that drives transmembrane transport and the ATP synthase. Cytochrome c oxidase is the component of the respiratory chain that catalyzes the reduction of oxygen to water. Electrons originating from reduced cytochrome c in the intermembrane space (IMS) are transferred via the dinuclear copper A center (CU(A)) of subunit 2 and heme A of subunit 1 to the active site in subunit 1, a binuclear center (BNC) formed by heme A3 and copper B (CU(B)). The BNC reduces molecular oxygen to 2 water molecules using 4 electrons from cytochrome c in the IMS and 4 protons from the mitochondrial matrix. This Cephalophorus natalensis (Natal red duiker) protein is Cytochrome c oxidase subunit 3 (MT-CO3).